Reading from the N-terminus, the 198-residue chain is Na(+)-translocating NADH-quinone reductase subunit E (198 aa).

A run of 6 helical transmembrane segments spans residues 11 to 31, 35 to 55, 77 to 97, 109 to 129, 140 to 160, and 176 to 196; these read AVFV…FLAV, VSTA…SVPA, FLNF…LEMI, LGIF…VSFM, IVYG…LAGI, and LGIT…FSGV.

The protein belongs to the NqrDE/RnfAE family. Composed of six subunits; NqrA, NqrB, NqrC, NqrD, NqrE and NqrF.

The protein localises to the cell inner membrane. The enzyme catalyses a ubiquinone + n Na(+)(in) + NADH + H(+) = a ubiquinol + n Na(+)(out) + NAD(+). Functionally, NQR complex catalyzes the reduction of ubiquinone-1 to ubiquinol by two successive reactions, coupled with the transport of Na(+) ions from the cytoplasm to the periplasm. NqrA to NqrE are probably involved in the second step, the conversion of ubisemiquinone to ubiquinol. This chain is Na(+)-translocating NADH-quinone reductase subunit E, found in Yersinia enterocolitica serotype O:8 / biotype 1B (strain NCTC 13174 / 8081).